A 475-amino-acid chain; its full sequence is Aspartyl/glutamyl-tRNA(Asn/Gln) amidotransferase subunit B (475 aa).

It belongs to the GatB/GatE family. GatB subfamily. Heterotrimer of A, B and C subunits.

The enzyme catalyses L-glutamyl-tRNA(Gln) + L-glutamine + ATP + H2O = L-glutaminyl-tRNA(Gln) + L-glutamate + ADP + phosphate + H(+). The catalysed reaction is L-aspartyl-tRNA(Asn) + L-glutamine + ATP + H2O = L-asparaginyl-tRNA(Asn) + L-glutamate + ADP + phosphate + 2 H(+). In terms of biological role, allows the formation of correctly charged Asn-tRNA(Asn) or Gln-tRNA(Gln) through the transamidation of misacylated Asp-tRNA(Asn) or Glu-tRNA(Gln) in organisms which lack either or both of asparaginyl-tRNA or glutaminyl-tRNA synthetases. The reaction takes place in the presence of glutamine and ATP through an activated phospho-Asp-tRNA(Asn) or phospho-Glu-tRNA(Gln). This chain is Aspartyl/glutamyl-tRNA(Asn/Gln) amidotransferase subunit B, found in Staphylococcus aureus (strain COL).